A 185-amino-acid polypeptide reads, in one-letter code: Inner membrane-spanning protein YciB (185 aa).

The next 5 membrane-spanning stretches (helical) occupy residues 19-39 (IHGI…LMAW), 49-69 (TMTW…LYFH), 72-92 (TFIK…LLFT), 122-142 (GYWI…AYAF), and 150-170 (FKLF…AVVI).

It belongs to the YciB family.

The protein localises to the cell inner membrane. In terms of biological role, plays a role in cell envelope biogenesis, maintenance of cell envelope integrity and membrane homeostasis. The polypeptide is Inner membrane-spanning protein YciB (Acidithiobacillus ferrooxidans (strain ATCC 23270 / DSM 14882 / CIP 104768 / NCIMB 8455) (Ferrobacillus ferrooxidans (strain ATCC 23270))).